The primary structure comprises 46 residues: Probable butyrate kinase (46 aa).

This sequence belongs to the acetokinase family.

The protein resides in the cytoplasm. The enzyme catalyses butanoate + ATP = butanoyl phosphate + ADP. This is Probable butyrate kinase (buk) from Geobacillus stearothermophilus (Bacillus stearothermophilus).